Reading from the N-terminus, the 241-residue chain is MTTLLISDLHLDEERPDIARAFLRFLKERASQAEALYILGDFFEAWIGDDAMTSFQRDIAAALREVAERGTRVFLMHGNRDFLVGHSFCRQAGCTLLRDPSRVILNGAPVLLMHGDTLCTRDIAYMRFRRRLRNPVSVWLLRHLPLSKRRQLARKWRDASRMQVRRKATEIVDVTPEEVPRIMAAHGVLTLIHGHTHRPAVHELQVDGRQARRIVLGDWNRQGWVLQVDGSGYHLTPFPID.

Mn(2+) contacts are provided by aspartate 8, histidine 10, aspartate 41, asparagine 79, and histidine 114. 79–80 is a substrate binding site; it reads NR. The substrate site is built by aspartate 122, serine 160, lysine 167, and histidine 195. The Mn(2+) site is built by histidine 195 and histidine 197.

It belongs to the LpxH family. Mn(2+) is required as a cofactor.

It is found in the cell inner membrane. It catalyses the reaction UDP-2-N,3-O-bis[(3R)-3-hydroxytetradecanoyl]-alpha-D-glucosamine + H2O = 2-N,3-O-bis[(3R)-3-hydroxytetradecanoyl]-alpha-D-glucosaminyl 1-phosphate + UMP + 2 H(+). The protein operates within glycolipid biosynthesis; lipid IV(A) biosynthesis; lipid IV(A) from (3R)-3-hydroxytetradecanoyl-[acyl-carrier-protein] and UDP-N-acetyl-alpha-D-glucosamine: step 4/6. Its function is as follows. Hydrolyzes the pyrophosphate bond of UDP-2,3-diacylglucosamine to yield 2,3-diacylglucosamine 1-phosphate (lipid X) and UMP by catalyzing the attack of water at the alpha-P atom. Involved in the biosynthesis of lipid A, a phosphorylated glycolipid that anchors the lipopolysaccharide to the outer membrane of the cell. This Azotobacter vinelandii (strain DJ / ATCC BAA-1303) protein is UDP-2,3-diacylglucosamine hydrolase.